We begin with the raw amino-acid sequence, 113 residues long: Nucleoid-associated protein PMT_0025 (113 aa).

The protein belongs to the YbaB/EbfC family. Homodimer.

The protein resides in the cytoplasm. It localises to the nucleoid. Binds to DNA and alters its conformation. May be involved in regulation of gene expression, nucleoid organization and DNA protection. This chain is Nucleoid-associated protein PMT_0025, found in Prochlorococcus marinus (strain MIT 9313).